The sequence spans 300 residues: Tegument protein VP22 (300 aa).

The segment at Met-1–Ala-148 is disordered. 2 stretches are compositionally biased toward basic and acidic residues: residues Cys-10–Leu-22 and Pro-50–Glu-61. A Nuclear localization signal motif is present at residues Gly-163–Lys-166. The interaction with gE stretch occupies residues Lys-174 to Val-267. Residues Leu-232–Thr-244 carry the Nuclear export signal motif. Residues Ala-269 to Ala-292 show a composition bias toward low complexity. The disordered stretch occupies residues Ala-269–Glu-300.

This sequence belongs to the alphaherpesvirinae VP22 tegument protein family. Interacts with gE (via C-terminus); this interaction is necessary for the recruitment of VP22 to the Golgi and its packaging into virions. Interacts with gM (via C-terminus). Interacts with VP16; this interaction allows the formation of a tripartite complex composed of VP16, VP22 and UL41/VHS. Interacts with the capsid-binding protein UL16. Interacts with host CGAS. In terms of processing, highly phosphorylated in the host cell. Packaging is selective for underphosphorylated forms.

The protein resides in the virion tegument. It is found in the host cytoplasm. The protein localises to the host nucleus. It localises to the host Golgi apparatus. Tegument protein that plays different roles during the time course of infection. Participates in both the accumulation of viral mRNAs and viral protein translation at late time of infection. Modulates the RNase activity of the virion host shutoff protein UL41 probably to ensure necessary levels of key cellular mRNAs and proteins. Plays a role in microtubule reorganization that occurs after viral infection by stabilizing microtubule network. Plays a role in the inhibition of host innate immune system by targeting the CGAS enzymatic activity which is the principal cytosolic DNA sensor that detects invading viral DNA. Acts by mediating disruption of liquid-like droplets in which CGAS is activated, thereby preventing CGAS activity. The sequence is that of Tegument protein VP22 from Homo sapiens (Human).